The primary structure comprises 461 residues: NADP-specific glutamate dehydrogenase (461 aa).

Lysine 115 is a catalytic residue.

It belongs to the Glu/Leu/Phe/Val dehydrogenases family. In terms of assembly, homohexamer.

It carries out the reaction L-glutamate + NADP(+) + H2O = 2-oxoglutarate + NH4(+) + NADPH + H(+). The polypeptide is NADP-specific glutamate dehydrogenase (GDH) (Penicillium chrysogenum (Penicillium notatum)).